The primary structure comprises 296 residues: Non-homologous end joining protein Ku (296 aa).

One can recognise a Ku domain in the interval 11–187 (TFGLVNIPVK…ELPEAGEPSS (177 aa)). The disordered stretch occupies residues 254–296 (AAARRRGDEHEAPARGERRHAAAAAARTTGRPRAARASRKKRG). Residues 258-273 (RRGDEHEAPARGERRH) show a composition bias toward basic and acidic residues. Residues 275–285 (AAAAARTTGRP) show a composition bias toward low complexity. Residues 286–296 (RAARASRKKRG) show a composition bias toward basic residues.

It belongs to the prokaryotic Ku family. As to quaternary structure, homodimer. Interacts with LigD.

In terms of biological role, with LigD forms a non-homologous end joining (NHEJ) DNA repair enzyme, which repairs dsDNA breaks with reduced fidelity. Binds linear dsDNA with 5'- and 3'- overhangs but not closed circular dsDNA nor ssDNA. Recruits and stimulates the ligase activity of LigD. The polypeptide is Non-homologous end joining protein Ku (Anaeromyxobacter sp. (strain K)).